Here is a 365-residue protein sequence, read N- to C-terminus: MRSEAERQRSFRAWPHTCRTVSPAELARSGFYYLGPGDRVQCFSCGGVLRSWEPGDRPDTEHRKFFPSCPFLQVRRGPPGGTDSVDGQILGQLSGEEPDRTWEPVCPQMAGEGDRLGSFSTWPRYANGDPQQLAGAGFFYTGHRDHVKCFHCDGGLRNWEQGDDPWTEHAKWFPMCDFLLQVKGEAFIRSVQESFFSSPETSPESVGSYEGSPVSSPGSPPVCPFLSTSVAQGALQMGFKRNRVSSLMINRFILTGSCYGSVSELVTDLIQAEEIHGTESVSVPRAPTQRERPEPPKEPAPPLSTEEQLRQLKEERMCKVCMDNDVSMVFVPCGHLVVCTECAPNLRHCPICRAAIRGSVRAFMS.

BIR repeat units follow at residues 7 to 73 (RQRS…PFLQ) and 115 to 180 (RLGS…DFLL). 4 residues coordinate Zn(2+): C149, C152, H169, and C176. Positions 186–234 (AFIRSVQESFFSSPETSPESVGSYEGSPVSSPGSPPVCPFLSTSVAQGA) are self-inhibits the anti-apoptotic function. S198 is subject to Phosphoserine. The residue at position 202 (S202) is a Phosphoserine; by MAPK1. A Phosphoserine modification is found at S212. 2 positions are modified to phosphoserine; by MAPK1: S216 and S219. Residues 278–306 (TESVSVPRAPTQRERPEPPKEPAPPLSTE) are disordered. Residues 288–297 (TQRERPEPPK) are compositionally biased toward basic and acidic residues. Residues 318-353 (CKVCMDNDVSMVFVPCGHLVVCTECAPNLRHCPICR) form an RING-type zinc finger.

Belongs to the IAP family. In terms of processing, auto-ubiquitinated, and degraded in a 2-step mechanism; a caspase-independent first step and a caspase-dependent second step. Phosphorylated via MAPK-dependent and CDK-dependent pathways during oocyte maturation. Phosphorylation does not appear to affect caspase inhibition or autoubiquitination activity.

The protein localises to the cytoplasm. The catalysed reaction is S-ubiquitinyl-[E2 ubiquitin-conjugating enzyme]-L-cysteine + [acceptor protein]-L-lysine = [E2 ubiquitin-conjugating enzyme]-L-cysteine + N(6)-ubiquitinyl-[acceptor protein]-L-lysine.. Weak apoptotic suppressor. Has E3 ubiquitin-protein ligase activity. Weak inhibitor of caspase activity. The chain is Baculoviral IAP repeat-containing protein 7 (birc7) from Xenopus tropicalis (Western clawed frog).